We begin with the raw amino-acid sequence, 318 residues long: Thymidylate synthase (318 aa).

DUMP contacts are provided by residues Arg-25 and 180–181; that span reads RR. Cys-200 serves as the catalytic Nucleophile. DUMP is bound by residues 220-223, Asn-231, and 261-263; these read RSGD and HIY. Asp-223 provides a ligand contact to (6R)-5,10-methylene-5,6,7,8-tetrahydrofolate. Ala-317 is a binding site for (6R)-5,10-methylene-5,6,7,8-tetrahydrofolate.

The protein belongs to the thymidylate synthase family. Bacterial-type ThyA subfamily. Homodimer.

The protein localises to the cytoplasm. It catalyses the reaction dUMP + (6R)-5,10-methylene-5,6,7,8-tetrahydrofolate = 7,8-dihydrofolate + dTMP. Its pathway is pyrimidine metabolism; dTTP biosynthesis. Catalyzes the reductive methylation of 2'-deoxyuridine-5'-monophosphate (dUMP) to 2'-deoxythymidine-5'-monophosphate (dTMP) while utilizing 5,10-methylenetetrahydrofolate (mTHF) as the methyl donor and reductant in the reaction, yielding dihydrofolate (DHF) as a by-product. This enzymatic reaction provides an intracellular de novo source of dTMP, an essential precursor for DNA biosynthesis. This Bacillus thuringiensis subsp. konkukian (strain 97-27) protein is Thymidylate synthase.